An 878-amino-acid chain; its full sequence is Enoyl-CoA isomerase/hydratase claC (878 aa).

Positions 541–561 are disordered; the sequence is VGPASTEATSPVVEPSTMESD. Substrate contacts are provided by residues 677 to 681 and G724; that span reads AGADL.

This sequence belongs to the enoyl-CoA hydratase/isomerase family.

Its pathway is secondary metabolite biosynthesis. Its function is as follows. Enoyl-CoA isomerase/hydratase; part of the cla gene cluster that produces clavatol and ortho-quinone methide. The clavatol biosynthesis cluster cla and the terrestric acid cluster tra are both involved in the production of peniphenones and penilactones. The non-reducing PKS claF is responsible for the formation of clavatol from successive condensations of 3 malonyl-CoA units, presumably with a simple acetyl-CoA starter unit, and 2 methylation steps. The esterase claE probably collaborates with claF by catalyzing the hydrolysis of ACP-bound acyl intermediates to free the ACP from stalled intermediates. The clavatol oxidase claD then converts clavatol to hydroxyclavatol. Spontaneous dehydration of hydroxyclavatol leads to the accumulation of the highly active ortho-quinone methide. On the other hand, the PKS-NRPS hybrid traA is involved in the formation of crustosic acid, with the help of traB and traD. The polyketide synthase module (PKS) of traA is responsible for the synthesis of the polyketide backbone via the condensation of an acetyl-CoA starter unit with 3 malonyl-CoA units. The downstream nonribosomal peptide synthetase (NRPS) module then amidates the carboxyl end of the polyketide with L-malic acid. Because traA lacks a designated enoylreductase (ER) domain, the required activity is provided the enoyl reductase traG. Crustosic acid undergoes decarboxylation and isomerization to the terrestric acid, catalyzed by the 2-oxoglutarate-dependent dioxygenase traH. Both acids are further converted to the 2 gamma-butyrolactones (R)-5-methyltetronic acid and (S)-5-carboxylmethyltetronic acid, with involvement of the cytochrome P450 monooxygenase claJ. Spontaneous addition of the methide to these gamma-butyrolactones leads to peniphenone D and penilactone D, which undergo again stereospecific attacking by methide to give penilactones A and B. The function of the enoyl-CoA isomerase/hydratase claC has not been investigated yet. This chain is Enoyl-CoA isomerase/hydratase claC, found in Penicillium crustosum (Blue mold fungus).